The primary structure comprises 233 residues: Leucyl/phenylalanyl-tRNA--protein transferase (233 aa).

It belongs to the L/F-transferase family.

Its subcellular location is the cytoplasm. The catalysed reaction is N-terminal L-lysyl-[protein] + L-leucyl-tRNA(Leu) = N-terminal L-leucyl-L-lysyl-[protein] + tRNA(Leu) + H(+). It catalyses the reaction N-terminal L-arginyl-[protein] + L-leucyl-tRNA(Leu) = N-terminal L-leucyl-L-arginyl-[protein] + tRNA(Leu) + H(+). The enzyme catalyses L-phenylalanyl-tRNA(Phe) + an N-terminal L-alpha-aminoacyl-[protein] = an N-terminal L-phenylalanyl-L-alpha-aminoacyl-[protein] + tRNA(Phe). Functions in the N-end rule pathway of protein degradation where it conjugates Leu, Phe and, less efficiently, Met from aminoacyl-tRNAs to the N-termini of proteins containing an N-terminal arginine or lysine. The chain is Leucyl/phenylalanyl-tRNA--protein transferase from Chromobacterium violaceum (strain ATCC 12472 / DSM 30191 / JCM 1249 / CCUG 213 / NBRC 12614 / NCIMB 9131 / NCTC 9757 / MK).